The sequence spans 475 residues: Glycogen synthase (475 aa).

Residue Lys-15 coordinates ADP-alpha-D-glucose.

This sequence belongs to the glycosyltransferase 1 family. Bacterial/plant glycogen synthase subfamily.

The enzyme catalyses [(1-&gt;4)-alpha-D-glucosyl](n) + ADP-alpha-D-glucose = [(1-&gt;4)-alpha-D-glucosyl](n+1) + ADP + H(+). It participates in glycan biosynthesis; glycogen biosynthesis. Its function is as follows. Synthesizes alpha-1,4-glucan chains using ADP-glucose. The sequence is that of Glycogen synthase from Alkaliphilus metalliredigens (strain QYMF).